An 800-amino-acid chain; its full sequence is Endoglucanase (800 aa).

The N-terminal stretch at 1–30 (MMLRKKTKQLISSILILVLLLSLFPTALAA) is a signal peptide. Residue Glu-190 is the Proton donor of the active site. Glu-305 functions as the Nucleophile in the catalytic mechanism. The tract at residues 761–800 (AATTEPVEPEPVDPGEETPPVDEKEAKTEQKEAEKEEKEE) is disordered. Acidic residues predominate over residues 767–780 (VEPEPVDPGEETPP). Positions 781-800 (VDEKEAKTEQKEAEKEEKEE) are enriched in basic and acidic residues.

It belongs to the glycosyl hydrolase 5 (cellulase A) family.

The enzyme catalyses Endohydrolysis of (1-&gt;4)-beta-D-glucosidic linkages in cellulose, lichenin and cereal beta-D-glucans.. The sequence is that of Endoglucanase from Halalkalibacter akibai (strain ATCC 43226 / DSM 21942 / CIP 109018 / JCM 9157 / 1139) (Bacillus akibai).